The chain runs to 360 residues: Alpha-2-HS-glycoprotein (360 aa).

A signal peptide spans 1-15 (LVLLLSLAQLWSCHL). The Cystatin fetuin-A-type 1 domain occupies 24–130 (YREHNCDDPE…QFTVLSAKCD (107 aa)). Disulfide bonds link cysteine 29-cysteine 351, cysteine 86-cysteine 97, cysteine 111-cysteine 129, cysteine 143-cysteine 146, cysteine 205-cysteine 216, and cysteine 227-cysteine 244. Asparagine 96 carries N-linked (GlcNAc...) asparagine glycosylation. Serine 131 carries the post-translational modification Phosphoserine. A Phosphothreonine modification is found at threonine 132. Serine 135 is subject to Phosphoserine. One can recognise a Cystatin fetuin-A-type 2 domain in the interval 141 to 252 (KLCPDCPLLT…TCTIFPAQPV (112 aa)). N-linked (GlcNAc...) asparagine glycosylation occurs at asparagine 153. Residues 260–285 (VAGAAAVEPAPAVDPASPVSPPDGQS) are disordered. Position 312 is a phosphothreonine (threonine 312). Phosphoserine occurs at positions 318, 321, and 323.

Belongs to the fetuin family. Phosphorylated by FAM20C in the extracellular medium. Bone marrow.

The protein resides in the secreted. In terms of biological role, a cell adhesion protein that binds immature cells of the granulocyte lineage. The protein is Alpha-2-HS-glycoprotein (AHSG) of Oryctolagus cuniculus (Rabbit).